Here is a 409-residue protein sequence, read N- to C-terminus: Serine/threonine transporter SstT (409 aa).

A run of 9 helical transmembrane segments spans residues 17–37 (LVGQIIVGLIAGLLLASFFPA), 49–69 (FVSALKAVAPVLVFVLVMASI), 83–103 (ILLLYLVGTFSAAVVAVIASF), 142–162 (ALISANFIGILAWAIGLGIAF), 180–200 (VSLIVKVVIRFAPLGIFGLVA), 218–238 (LVVLLGCMLFVAFVVNPLIVF), 301–321 (GAAITITVLTLAAVHTLGIAV), 331–351 (VVASVCACGASGVAGGSLLLI), and 357–377 (LFGIPSEVAMQVVAVGFIIAI).

It belongs to the dicarboxylate/amino acid:cation symporter (DAACS) (TC 2.A.23) family.

The protein localises to the cell inner membrane. It catalyses the reaction L-serine(in) + Na(+)(in) = L-serine(out) + Na(+)(out). The catalysed reaction is L-threonine(in) + Na(+)(in) = L-threonine(out) + Na(+)(out). Involved in the import of serine and threonine into the cell, with the concomitant import of sodium (symport system). The protein is Serine/threonine transporter SstT of Pseudomonas aeruginosa (strain UCBPP-PA14).